Reading from the N-terminus, the 553-residue chain is MGPRPSTKNPTPMMLTVRVALVLSCICPANSIDGRPLAAAGIVVTGDKAVNIYTSSQTGSIIVKLLPNLPKDKEACAKAPLDAYNRTLTTLLTPLGDSIRRIQESVTTSGGRRQKRFIGAIIGGVALGVATAAQITAAAALIQAKQNAANILRLKESIAATNEAVHEVTDGLSQLAVAVGKMQQFVNDQFNKTAQESGCIRIAQQVGVELNLYLTELTTVFGPQITSPALNKLTIQALYNLAGGNMDYLLTKLGVGNNQLSSLIGSGLITGNPILYDSQTQLLGIQVTLPSVGNLNNMRATYLETLSVSTTRGFASALVPKVVTQVGSVIEELDTSYCIETDLDLYCTRIVTFPMSPGIYSCLSGNTSACMYSKTEGALTTPYMTIKGSVIANCKMTTCRCVNPPGIISQNYGEAVSLIDKQSCNVLSLDGITLRLSGEFDATYQKNISIQDSQVIITGNLDISTELGNVNNSISNALNKLEESNSKLDKVNVKLTSTSALITYIVLTIISLVFGILSLVLACYLMYKQKAQQKTLLWLGNNTLDQMRATTKM.

The first 31 residues, 1 to 31 (MGPRPSTKNPTPMMLTVRVALVLSCICPANS), serve as a signal peptide directing secretion. Residues 32–500 (IDGRPLAAAG…VNVKLTSTSA (469 aa)) lie on the Extracellular side of the membrane. Intrachain disulfides connect Cys76–Cys199, Cys338–Cys347, and Cys362–Cys370. The N-linked (GlcNAc...) asparagine; by host glycan is linked to Asn85. Residues 117-141 (FIGAIIGGVALGVATAAQITAAAAL) are fusion peptide. Residues 142-170 (IQAKQNAANILRLKESIAATNEAVHEVTD) adopt a coiled-coil conformation. Asn191 is a glycosylation site (N-linked (GlcNAc...) asparagine; by host). 3 N-linked (GlcNAc...) asparagine; by host glycosylation sites follow: Asn366, Asn447, and Asn471. The stretch at 466-491 (ELGNVNNSISNALNKLEESNSKLDKV) forms a coiled coil. A helical transmembrane segment spans residues 501 to 521 (LITYIVLTIISLVFGILSLVL). The Cytoplasmic segment spans residues 522-553 (ACYLMYKQKAQQKTLLWLGNNTLDQMRATTKM). Cys523 is lipidated: S-palmitoyl cysteine; by host.

This sequence belongs to the paramyxoviruses fusion glycoprotein family. As to quaternary structure, homotrimer of disulfide-linked F1-F2. The inactive precursor F0 is glycosylated and proteolytically cleaved into F1 and F2 to be functionally active. The cleavage is mediated by cellular proteases during the transport and maturation of the polypeptide.

The protein resides in the virion membrane. It is found in the host cell membrane. Functionally, class I viral fusion protein. Under the current model, the protein has at least 3 conformational states: pre-fusion native state, pre-hairpin intermediate state, and post-fusion hairpin state. During viral and plasma cell membrane fusion, the heptad repeat (HR) regions assume a trimer-of-hairpins structure, positioning the fusion peptide in close proximity to the C-terminal region of the ectodomain. The formation of this structure appears to drive apposition and subsequent fusion of viral and plasma cell membranes. Directs fusion of viral and cellular membranes leading to delivery of the nucleocapsid into the cytoplasm. This fusion is pH independent and occurs directly at the outer cell membrane. The trimer of F1-F2 (F protein) probably interacts with HN at the virion surface. Upon HN binding to its cellular receptor, the hydrophobic fusion peptide is unmasked and interacts with the cellular membrane, inducing the fusion between cell and virion membranes. Later in infection, F proteins expressed at the plasma membrane of infected cells could mediate fusion with adjacent cells to form syncytia, a cytopathic effect that could lead to tissue necrosis. This is Fusion glycoprotein F0 (F) from Gallus gallus (Chicken).